The chain runs to 397 residues: Arginine biosynthesis bifunctional protein ArgJ (397 aa).

Positions 147, 173, 184, 270, 392, and 397 each coordinate substrate. The active-site Nucleophile is the T184.

The protein belongs to the ArgJ family. As to quaternary structure, heterotetramer of two alpha and two beta chains.

The protein localises to the cytoplasm. It catalyses the reaction N(2)-acetyl-L-ornithine + L-glutamate = N-acetyl-L-glutamate + L-ornithine. The catalysed reaction is L-glutamate + acetyl-CoA = N-acetyl-L-glutamate + CoA + H(+). Its pathway is amino-acid biosynthesis; L-arginine biosynthesis; L-ornithine and N-acetyl-L-glutamate from L-glutamate and N(2)-acetyl-L-ornithine (cyclic): step 1/1. It functions in the pathway amino-acid biosynthesis; L-arginine biosynthesis; N(2)-acetyl-L-ornithine from L-glutamate: step 1/4. In terms of biological role, catalyzes two activities which are involved in the cyclic version of arginine biosynthesis: the synthesis of N-acetylglutamate from glutamate and acetyl-CoA as the acetyl donor, and of ornithine by transacetylation between N(2)-acetylornithine and glutamate. In Streptococcus mutans serotype c (strain ATCC 700610 / UA159), this protein is Arginine biosynthesis bifunctional protein ArgJ.